The primary structure comprises 748 residues: Disintegrin and metalloproteinase domain-containing protein 10 (748 aa).

Positions 1–19 (MVLLRVLILLLSWAAGMGG) are cleaved as a signal peptide. Positions 20 to 213 (QYGNPLNKYI…NGPELLRKKR (194 aa)) are excised as a propeptide. At 20-672 (QYGNPLNKYI…SPELYENIAE (653 aa)) the chain is on the extracellular side. The Cysteine switch motif lies at 171–178 (GGCADHSV). Zn(2+) is bound at residue Cys173. One can recognise a Peptidase M12B domain in the interval 220-456 (NTCQLYIQTD…KRNNCFVESG (237 aa)). 17 cysteine pairs are disulfide-bonded: Cys222–Cys313, Cys344–Cys451, Cys399–Cys435, Cys460–Cys495, Cys471–Cys484, Cys473–Cys479, Cys483–Cys515, Cys503–Cys511, Cys510–Cys536, Cys524–Cys543, Cys530–Cys562, Cys555–Cys567, Cys572–Cys598, Cys580–Cys607, Cys582–Cys597, Cys594–Cys639, and Cys632–Cys645. 2 N-linked (GlcNAc...) asparagine glycosylation sites follow: Asn267 and Asn278. Position 383 (His383) interacts with Zn(2+). Glu384 is an active-site residue. Residues His387 and His393 each coordinate Zn(2+). An N-linked (GlcNAc...) asparagine glycan is attached at Asn439. The Disintegrin domain occupies 457–551 (QPICGNGMVE…LCPASDPKPN (95 aa)). Residue Asn551 is glycosylated (N-linked (GlcNAc...) asparagine). The chain crosses the membrane as a helical span at residues 673-693 (WIVAHWWAVLLMGIALIMLMA). Over 694–748 (GFIKICSVHTPSSNPKLPPPKPLPGTLKRRRPPQPIQQPQRQRPRESYQMGHMRR) the chain is Cytoplasmic. The segment at 704 to 748 (PSSNPKLPPPKPLPGTLKRRRPPQPIQQPQRQRPRESYQMGHMRR) is disordered. The short motif at 708-715 (PKLPPPKP) is the SH3-binding element. Phosphothreonine; by FAM20C is present on Thr719. The SH3-binding motif lies at 722–728 (RRRPPQP). An interaction with AP2A1, AP2A2 and AP2M1 region spans residues 734-748 (RQRPRESYQMGHMRR).

Forms a ternary EFNA5-EPHA3-ADAM10 complex mediating EFNA5 extracellular domain shedding by ADAM10 which regulates the EFNA5-EPHA3 complex internalization and function, the cleavage occurs in trans, with ADAM10 and its substrate being on the membranes of opposing cells. Interacts with the clathrin adapter AP2 complex subunits AP2A1, AP2A2, AP2B1, and AP2M1; this interaction facilitates ADAM10 endocytosis from the plasma membrane during long-term potentiation in hippocampal neurons. Forms a ternary complex composed of ADAM10, EPHA4 and CADH1; within the complex, ADAM10 cleaves CADH1 which disrupts adherens junctions. Interacts with EPHA2. Interacts with NGF in a divalent cation-dependent manner. Interacts with TSPAN14; the interaction promotes ADAM10 maturation and cell surface expression. Interacts with TSPAN5, TSPAN10, TSPAN14, TSPAN15, TSPAN17 and TSPAN33; these interactions regulate ADAM10 substrate specificity, endocytosis and turnover. Interacts (via extracellular domain) with TSPAN33 (via extracellular domain) and (via cytoplasmic domain) with AFDN; interaction with TSPAN33 allows the docking of ADAM10 to zonula adherens through a PDZ11-dependent interaction between TSPAN33 and PLEKHA7 while interaction with AFDN locks ADAM10 at zonula adherens. Interacts with DLG1; this interaction recruits ADAM10 to the cell membrane during long-term depression in hippocampal neurons. Interacts (via extracellular domain) with BACE1 (via extracellular domain). Interacts with FAM171A1. As to quaternary structure, (Microbial infection) Interacts with S.aureus hly; this interaction is necessary for toxin pore formation, disruption of focal adhesions and S.aureus hly-mediated cytotoxicity. Requires Zn(2+) as cofactor. Post-translationally, the precursor is cleaved by furin and PCSK7. As to expression, expressed in the brain (at protein level). Expressed in spleen, lymph node, thymus, peripheral blood leukocyte, bone marrow, cartilage, chondrocytes and fetal liver.

It is found in the cell membrane. Its subcellular location is the golgi apparatus membrane. It localises to the cytoplasmic vesicle. The protein resides in the clathrin-coated vesicle. The protein localises to the cell projection. It is found in the axon. Its subcellular location is the dendrite. It localises to the cell junction. The protein resides in the adherens junction. The protein localises to the cytoplasm. The catalysed reaction is Endopeptidase of broad specificity.. With respect to regulation, catalytically inactive when the propeptide is intact and associated with the mature enzyme. The disintegrin and cysteine-rich regions modulate access of substrates to exerts an inhibitory effect on the cleavage of ADAM10 substrates. Transmembrane metalloprotease which mediates the ectodomain shedding of a myriad of transmembrane proteins, including adhesion proteins, growth factor precursors and cytokines being essential for development and tissue homeostasis. Associates with six members of the tetraspanin superfamily TspanC8 which regulate its exit from the endoplasmic reticulum and its substrate selectivity. Cleaves the membrane-bound precursor of TNF-alpha at '76-Ala-|-Val-77' to its mature soluble form. Responsible for the proteolytical release of soluble JAM3 from endothelial cells surface. Responsible for the proteolytic release of several other cell-surface proteins, including heparin-binding epidermal growth-like factor, ephrin-A2, CD44, CDH2 and for constitutive and regulated alpha-secretase cleavage of amyloid precursor protein (APP). Contributes to the normal cleavage of the cellular prion protein. Involved in the cleavage of the adhesion molecule L1 at the cell surface and in released membrane vesicles, suggesting a vesicle-based protease activity. Also controls the proteolytic processing of Notch and mediates lateral inhibition during neurogenesis. Required for the development of type 1 transitional B cells into marginal zone B cells, probably by cleaving Notch. Responsible for the FasL ectodomain shedding and for the generation of the remnant ADAM10-processed FasL (FasL APL) transmembrane form. Also cleaves the ectodomain of the integral membrane proteins CORIN and ITM2B. Mediates the proteolytic cleavage of LAG3, leading to release the secreted form of LAG3. Mediates the proteolytic cleavage of IL6R and IL11RA, leading to the release of secreted forms of IL6R and IL11RA. Enhances the cleavage of CHL1 by BACE1. Cleaves NRCAM. Cleaves TREM2, resulting in shedding of the TREM2 ectodomain. Involved in the development and maturation of glomerular and coronary vasculature. During development of the cochlear organ of Corti, promotes pillar cell separation by forming a ternary complex with CADH1 and EPHA4 and cleaving CADH1 at adherens junctions. May regulate the EFNA5-EPHA3 signaling. Regulates leukocyte transmigration as a sheddase for the adherens junction protein VE-cadherin/CDH5 in endothelial cells. Functionally, (Microbial infection) Promotes the cytotoxic activity of S.aureus hly by binding to the toxin at zonula adherens and promoting formation of toxin pores. This Homo sapiens (Human) protein is Disintegrin and metalloproteinase domain-containing protein 10.